Consider the following 207-residue polypeptide: Thiamine-phosphate synthase (207 aa).

Residues 37–41 (QLREK) and Asn69 each bind 4-amino-2-methyl-5-(diphosphooxymethyl)pyrimidine. Asp70 and Asp89 together coordinate Mg(2+). Ser108 lines the 4-amino-2-methyl-5-(diphosphooxymethyl)pyrimidine pocket. 134–136 (TGS) lines the 2-[(2R,5Z)-2-carboxy-4-methylthiazol-5(2H)-ylidene]ethyl phosphate pocket. Lys137 lines the 4-amino-2-methyl-5-(diphosphooxymethyl)pyrimidine pocket. 2-[(2R,5Z)-2-carboxy-4-methylthiazol-5(2H)-ylidene]ethyl phosphate is bound by residues Gly165 and 185–186 (IS).

Belongs to the thiamine-phosphate synthase family. The cofactor is Mg(2+).

It catalyses the reaction 2-[(2R,5Z)-2-carboxy-4-methylthiazol-5(2H)-ylidene]ethyl phosphate + 4-amino-2-methyl-5-(diphosphooxymethyl)pyrimidine + 2 H(+) = thiamine phosphate + CO2 + diphosphate. The catalysed reaction is 2-(2-carboxy-4-methylthiazol-5-yl)ethyl phosphate + 4-amino-2-methyl-5-(diphosphooxymethyl)pyrimidine + 2 H(+) = thiamine phosphate + CO2 + diphosphate. The enzyme catalyses 4-methyl-5-(2-phosphooxyethyl)-thiazole + 4-amino-2-methyl-5-(diphosphooxymethyl)pyrimidine + H(+) = thiamine phosphate + diphosphate. The protein operates within cofactor biosynthesis; thiamine diphosphate biosynthesis; thiamine phosphate from 4-amino-2-methyl-5-diphosphomethylpyrimidine and 4-methyl-5-(2-phosphoethyl)-thiazole: step 1/1. Functionally, condenses 4-methyl-5-(beta-hydroxyethyl)thiazole monophosphate (THZ-P) and 2-methyl-4-amino-5-hydroxymethyl pyrimidine pyrophosphate (HMP-PP) to form thiamine monophosphate (TMP). This chain is Thiamine-phosphate synthase, found in Desulfitobacterium hafniense (strain DSM 10664 / DCB-2).